Reading from the N-terminus, the 171-residue chain is MSNANSFTKEDLIACGLGKLFGPNSPRLPKDNMLMIDRVLKINADGGEYGKGEIVAELDINPDLWFFDCHFATDPVMPGCLGLDAMWQLVGFFLGWEGAEGKGRALGVGEVKFTGQVLPEAKKVTYKLTIKRKVYRKLVMGIADATMEVDGREIYSAKDLKVGIFTDTTSF.

The active site involves histidine 70.

Belongs to the thioester dehydratase family. FabA subfamily. As to quaternary structure, homodimer.

The protein resides in the cytoplasm. The enzyme catalyses a (3R)-hydroxyacyl-[ACP] = a (2E)-enoyl-[ACP] + H2O. It carries out the reaction (3R)-hydroxydecanoyl-[ACP] = (2E)-decenoyl-[ACP] + H2O. It catalyses the reaction (2E)-decenoyl-[ACP] = (3Z)-decenoyl-[ACP]. Its pathway is lipid metabolism; fatty acid biosynthesis. Its function is as follows. Necessary for the introduction of cis unsaturation into fatty acids. Catalyzes the dehydration of (3R)-3-hydroxydecanoyl-ACP to E-(2)-decenoyl-ACP and then its isomerization to Z-(3)-decenoyl-ACP. Can catalyze the dehydratase reaction for beta-hydroxyacyl-ACPs with saturated chain lengths up to 16:0, being most active on intermediate chain length. This Shewanella pealeana (strain ATCC 700345 / ANG-SQ1) protein is 3-hydroxydecanoyl-[acyl-carrier-protein] dehydratase.